The chain runs to 758 residues: Dachshund homolog 1 (758 aa).

Disordered regions lie at residues 1–105 and 134–185; these read MAVP…SNCN and INAS…TPQN. A compositionally biased stretch (low complexity) spans 20 to 53; it reads ISTSASSSGTTTSTSSATSSPAPSIGPPASSGPT. Residues 73–102 show a composition bias toward gly residues; that stretch reads TGGGGGGGGSGGGGGSSGNGGGGGGGGGGS. Residues 140–163 show a composition bias toward low complexity; that stretch reads SSSSSSSSSSSSSSSSSSSSSSSS. Over residues 174–185 the composition is skewed to polar residues; it reads STPSPVENTPQN. The tract at residues 189–275 is DACHbox-N; that stretch reads KMVDLRGAKV…LISRKDFETL (87 aa). The segment at 189-384 is interaction with SIX6 and HDAC3; the sequence is KMVDLRGAKV…VGSSDGSWDK (196 aa). Disordered stretches follow at residues 280–302, 358–414, 474–532, and 544–564; these read TNAS…PENS, SNNQ…PLSH, SPPS…RIPV, and MGLS…GHDM. 3 stretches are compositionally biased toward polar residues: residues 292-301, 358-380, and 387-399; these read RTQSVTSPEN, SNNQ…SSDG, and LPSS…QASI. Phosphoserine is present on Ser491. The span at 506 to 524 shows a compositional bias: low complexity; sequence SHPSSHRSSSVSSSPARTE. A compositionally biased stretch (basic and acidic residues) spans 555–564; that stretch reads KEGDLAGHDM. Residues 616-696 are DACHbox-C; sequence SSIETLLTNI…KAKRKLQEAL (81 aa). An interaction with SIN3A region spans residues 627-706; it reads GLLKVAIDNA…EFETKRREQA (80 aa). Residues 630-718 are a coiled coil; the sequence is KVAIDNARAQ…TLKQAASTDS (89 aa).

The protein belongs to the DACH/dachshund family. In terms of assembly, interacts with SIX1, SIX6 and EYA3. Interacts with NCOR1 and HDAC3 through its N-terminus. Interacts with SIN3A through its C-terminus. Interacts with SMAD3 and SMAD4. As to expression, widely expressed. Isoform 2 is found in brain, heart, kidney, liver, leukocytes and spleen. Isoform 3 is found in liver and heart. Isoform 4 is found in spleen.

Its subcellular location is the nucleus. In terms of biological role, transcription factor that is involved in regulation of organogenesis. Seems to be a regulator of SIX1, SIX6 and probably SIX5. Corepression of precursor cell proliferation in myoblasts by SIX1 is switched to coactivation through recruitment of EYA3 to the SIX1-DACH1 complex. Transcriptional activation also seems to involve association of CREBBP. Seems to act as a corepressor of SIX6 in regulating proliferation by directly repressing cyclin-dependent kinase inhibitors, including the p27Kip1 promoter. Inhibits TGF-beta signaling through interaction with SMAD4 and NCOR1. Binds to chromatin DNA via its DACHbox-N domain. This chain is Dachshund homolog 1 (DACH1), found in Homo sapiens (Human).